We begin with the raw amino-acid sequence, 316 residues long: 4-hydroxyphenylacetate decarboxylase activating enzyme (316 aa).

One can recognise a Radical SAM core domain in the interval 20–307; the sequence is HDGPGCRTTV…QDIFLDNGIA (288 aa). [4Fe-4S] cluster-binding residues include Cys-34, Cys-38, Cys-41, Cys-60, Cys-66, Cys-69, and Cys-105. Residue 40–42 coordinates S-adenosyl-L-methionine; the sequence is WCA. A 4Fe-4S ferredoxin-type domain is found at 84 to 115; it reads NKPVIDWNICKDCESFECVNSCYYNAFKLCAK. Residues Gly-144, 193-195, and His-267 contribute to the S-adenosyl-L-methionine site; that span reads DIK.

This sequence belongs to the organic radical-activating enzymes family. As to quaternary structure, monomer. It depends on [4Fe-4S] cluster as a cofactor.

The enzyme catalyses glycyl-[protein] + reduced [flavodoxin] + S-adenosyl-L-methionine = glycin-2-yl radical-[protein] + semiquinone [flavodoxin] + 5'-deoxyadenosine + L-methionine + H(+). Catalyzes activation of 4-hydroxyphenylacetate decarboxylase under anaerobic conditions by generation of an organic free radical on a glycine residue, via a homolytic cleavage of S-adenosyl-L-methionine (SAM). The polypeptide is 4-hydroxyphenylacetate decarboxylase activating enzyme (Clostridioides difficile (Peptoclostridium difficile)).